Consider the following 227-residue polypeptide: 7-cyano-7-deazaguanine synthase (227 aa).

8-18 serves as a coordination point for ATP; that stretch reads LSGGLDSATVL. Zn(2+) is bound by residues Cys-191, Cys-201, Cys-204, and Cys-207.

It belongs to the QueC family. Requires Zn(2+) as cofactor.

It carries out the reaction 7-carboxy-7-deazaguanine + NH4(+) + ATP = 7-cyano-7-deazaguanine + ADP + phosphate + H2O + H(+). Its pathway is purine metabolism; 7-cyano-7-deazaguanine biosynthesis. Functionally, catalyzes the ATP-dependent conversion of 7-carboxy-7-deazaguanine (CDG) to 7-cyano-7-deazaguanine (preQ(0)). In Paramagnetospirillum magneticum (strain ATCC 700264 / AMB-1) (Magnetospirillum magneticum), this protein is 7-cyano-7-deazaguanine synthase.